Consider the following 933-residue polypeptide: Phosphoenolpyruvate carboxylase (933 aa).

Catalysis depends on residues His158 and Lys592.

The protein belongs to the PEPCase type 1 family. The cofactor is Mg(2+).

It catalyses the reaction oxaloacetate + phosphate = phosphoenolpyruvate + hydrogencarbonate. Its function is as follows. Forms oxaloacetate, a four-carbon dicarboxylic acid source for the tricarboxylic acid cycle. In Nitrosomonas eutropha (strain DSM 101675 / C91 / Nm57), this protein is Phosphoenolpyruvate carboxylase.